Here is a 120-residue protein sequence, read N- to C-terminus: NAD(P)H-quinone oxidoreductase subunit 3 (120 aa).

Transmembrane regions (helical) follow at residues 6 to 26, 64 to 84, and 89 to 109; these read GYDA…LALI, MFAL…PWAV, and LGVL…VALA.

Belongs to the complex I subunit 3 family. As to quaternary structure, NDH-1 can be composed of about 15 different subunits; different subcomplexes with different compositions have been identified which probably have different functions.

It is found in the cellular thylakoid membrane. The catalysed reaction is a plastoquinone + NADH + (n+1) H(+)(in) = a plastoquinol + NAD(+) + n H(+)(out). The enzyme catalyses a plastoquinone + NADPH + (n+1) H(+)(in) = a plastoquinol + NADP(+) + n H(+)(out). In terms of biological role, NDH-1 shuttles electrons from an unknown electron donor, via FMN and iron-sulfur (Fe-S) centers, to quinones in the respiratory and/or the photosynthetic chain. The immediate electron acceptor for the enzyme in this species is believed to be plastoquinone. Couples the redox reaction to proton translocation, and thus conserves the redox energy in a proton gradient. Cyanobacterial NDH-1 also plays a role in inorganic carbon-concentration. This Parasynechococcus marenigrum (strain WH8102) protein is NAD(P)H-quinone oxidoreductase subunit 3.